Here is a 102-residue protein sequence, read N- to C-terminus: NADH-quinone oxidoreductase subunit K (102 aa).

Helical transmembrane passes span Leu6–Val26, Leu30–Leu50, and Val62–Val82.

Belongs to the complex I subunit 4L family. NDH-1 is composed of 14 different subunits. Subunits NuoA, H, J, K, L, M, N constitute the membrane sector of the complex.

It localises to the cell inner membrane. It catalyses the reaction a quinone + NADH + 5 H(+)(in) = a quinol + NAD(+) + 4 H(+)(out). NDH-1 shuttles electrons from NADH, via FMN and iron-sulfur (Fe-S) centers, to quinones in the respiratory chain. The immediate electron acceptor for the enzyme in this species is believed to be ubiquinone. Couples the redox reaction to proton translocation (for every two electrons transferred, four hydrogen ions are translocated across the cytoplasmic membrane), and thus conserves the redox energy in a proton gradient. The sequence is that of NADH-quinone oxidoreductase subunit K from Acinetobacter baumannii (strain AB307-0294).